The chain runs to 473 residues: Ribulose bisphosphate carboxylase large chain 2 (473 aa).

Positions 116 and 166 each coordinate substrate. Lys-168 serves as the catalytic Proton acceptor. Lys-170 is a binding site for substrate. Mg(2+) is bound by residues Lys-194, Asp-196, and Glu-197. At Lys-194 the chain carries N6-carboxylysine. Residue His-287 is the Proton acceptor of the active site. Substrate-binding residues include Arg-288, His-320, and Ser-372.

The protein belongs to the RuBisCO large chain family. Type I subfamily. In terms of assembly, heterohexadecamer of 8 large chains and 8 small chains. Mg(2+) is required as a cofactor.

The enzyme catalyses 2 (2R)-3-phosphoglycerate + 2 H(+) = D-ribulose 1,5-bisphosphate + CO2 + H2O. It carries out the reaction D-ribulose 1,5-bisphosphate + O2 = 2-phosphoglycolate + (2R)-3-phosphoglycerate + 2 H(+). Functionally, ruBisCO catalyzes two reactions: the carboxylation of D-ribulose 1,5-bisphosphate, the primary event in carbon dioxide fixation, as well as the oxidative fragmentation of the pentose substrate. Both reactions occur simultaneously and in competition at the same active site. In Acidithiobacillus ferrooxidans (Thiobacillus ferrooxidans), this protein is Ribulose bisphosphate carboxylase large chain 2.